Consider the following 333-residue polypeptide: Flap endonuclease 1 (333 aa).

Positions 1-99 (MGVALRDILA…ETNAERKKLR (99 aa)) are N-domain. Residues D28, D81, E153, E155, D174, D176, and D235 each contribute to the Mg(2+) site. An I-domain region spans residues 117 to 256 (EAYRQARSAT…TALKIVKSGG (140 aa)). The segment at 325-333 (GQKTLESFF) is interaction with PCNA.

It belongs to the XPG/RAD2 endonuclease family. FEN1 subfamily. As to quaternary structure, interacts with PCNA. PCNA stimulates the nuclease activity without altering cleavage specificity. Requires Mg(2+) as cofactor.

Its function is as follows. Structure-specific nuclease with 5'-flap endonuclease and 5'-3' exonuclease activities involved in DNA replication and repair. During DNA replication, cleaves the 5'-overhanging flap structure that is generated by displacement synthesis when DNA polymerase encounters the 5'-end of a downstream Okazaki fragment. Binds the unpaired 3'-DNA end and kinks the DNA to facilitate 5' cleavage specificity. Cleaves one nucleotide into the double-stranded DNA from the junction in flap DNA, leaving a nick for ligation. Also involved in the base excision repair (BER) pathway. Acts as a genome stabilization factor that prevents flaps from equilibrating into structures that lead to duplications and deletions. Also possesses 5'-3' exonuclease activity on nicked or gapped double-stranded DNA. The protein is Flap endonuclease 1 of Methanoregula boonei (strain DSM 21154 / JCM 14090 / 6A8).